The sequence spans 1360 residues: TRAF2 and NCK-interacting protein kinase (1360 aa).

The Protein kinase domain occupies 25 to 289 (FELVELVGNG…TEQLMKHPFI (265 aa)). ATP is bound by residues 31–39 (VGNGTYGQV) and Lys-54. Asp-153 serves as the catalytic Proton acceptor. Thr-187 carries the phosphothreonine modification. 3 disordered regions span residues 284–347 (MKHP…LPGE), 398–440 (QKEQ…RRRA), and 539–589 (ERSR…RPVD). The span at 288–307 (FIRDQPNERQVRIQLKDHID) shows a compositional bias: basic and acidic residues. The segment at 290–1047 (RDQPNERQVR…EIRKYKKRFN (758 aa)) is mediates interaction with NEDD4. Over residues 317–335 (DETEYEYSGSEEEEEENDS) the composition is skewed to acidic residues. Residues Ser-324 and Ser-326 each carry the phosphoserine modification. A phosphoserine mark is found at Ser-560 and Ser-570. A Phosphothreonine modification is found at Thr-581. Ser-600, Ser-608, Ser-610, and Ser-640 each carry phosphoserine. Disordered stretches follow at residues 601–801 (QGPA…KAID), 814–878 (LRIE…YNVG), 908–927 (TSGE…AGHI), and 933–998 (VQQS…ESSA). Residues 652 to 669 (RIEKFDRSSWLRQEEDIP) show a composition bias toward basic and acidic residues. Ser-678, Ser-680, Ser-688, Ser-701, Ser-707, Ser-720, Ser-764, Ser-766, and Ser-769 each carry phosphoserine. The segment covering 720-755 (SPLQRTSSGSSSSSSTPSSQPSSQGGSQPGSQAGSS) has biased composition (low complexity). Composition is skewed to basic and acidic residues over residues 775 to 789 (EPAK…DITR) and 814 to 827 (LRIE…KKVT). The segment covering 834 to 847 (EESESSEEEEEDGE) has biased composition (acidic residues). Residues 908 to 917 (TSGEKKRSGH) are compositionally biased toward basic and acidic residues. Phosphoserine is present on Ser-959. Acidic residues predominate over residues 987–996 (TDEDEEDEES). Residues 1047–1334 (NSEILCAALW…KFLCERNDKV (288 aa)) form the CNH domain.

This sequence belongs to the protein kinase superfamily. STE Ser/Thr protein kinase family. STE20 subfamily. In terms of assembly, interacts (via the CNH domain) with RAP2A (GTP-bound form preferentially); the interaction is direct and required for the activation of TNIK by RAP2A. Interacts with NEDD4; recruits RAP2A to NEDD4. Interacts with TRAF2 and NCK. Interacts with TCF7L2/TCF4 and CTNNB1; the interaction is direct. Interacts with TANC1. In terms of processing, autophosphorylated. Autophosphorylation is activated by RAP2A and induces association to the cytoskeletal fraction. As to expression, expressed ubiquitously. Highest levels observed in heart, brain and skeletal muscle. Expressed in normal colonic epithelia and colorectal cancer tissues.

The protein localises to the nucleus. It is found in the cytoplasm. Its subcellular location is the recycling endosome. The protein resides in the cytoskeleton. It carries out the reaction L-seryl-[protein] + ATP = O-phospho-L-seryl-[protein] + ADP + H(+). The enzyme catalyses L-threonyl-[protein] + ATP = O-phospho-L-threonyl-[protein] + ADP + H(+). Functionally, serine/threonine kinase that acts as an essential activator of the Wnt signaling pathway. Recruited to promoters of Wnt target genes and required to activate their expression. May act by phosphorylating TCF4/TCF7L2. Appears to act upstream of the JUN N-terminal pathway. May play a role in the response to environmental stress. Part of a signaling complex composed of NEDD4, RAP2A and TNIK which regulates neuronal dendrite extension and arborization during development. More generally, it may play a role in cytoskeletal rearrangements and regulate cell spreading. Phosphorylates SMAD1 on Thr-322. Activator of the Hippo signaling pathway which plays a pivotal role in organ size control and tumor suppression by restricting proliferation and promoting apoptosis. MAP4Ks act in parallel to and are partially redundant with STK3/MST2 and STK4/MST2 in the phosphorylation and activation of LATS1/2, and establish MAP4Ks as components of the expanded Hippo pathway. The sequence is that of TRAF2 and NCK-interacting protein kinase from Homo sapiens (Human).